The following is a 449-amino-acid chain: Serine/threonine-protein phosphatase 2A activator 2 (449 aa).

Disordered stretches follow at residues Met1 to Thr72 and Met378 to Trp416. The segment covering Asn54–Asp69 has biased composition (pro residues). The segment covering Glu389–Asp403 has biased composition (acidic residues).

Belongs to the PTPA-type PPIase family.

The protein localises to the cytoplasm. The catalysed reaction is [protein]-peptidylproline (omega=180) = [protein]-peptidylproline (omega=0). Its function is as follows. PPIases accelerate the folding of proteins. It catalyzes the cis-trans isomerization of proline imidic peptide bonds in oligopeptides. Acts as a regulatory subunit for PP2A-like phosphatases modulating their activity or substrate specificity, probably by inducing a conformational change in the catalytic subunit, a direct target of the PPIase. Can reactivate inactive phosphatase PP2A-phosphatase methylesterase complexes (PP2Ai) in presence of ATP and Mg(2+) by dissociating the inactive form from the complex. In Neurospora crassa (strain ATCC 24698 / 74-OR23-1A / CBS 708.71 / DSM 1257 / FGSC 987), this protein is Serine/threonine-protein phosphatase 2A activator 2 (rrd-2).